A 558-amino-acid polypeptide reads, in one-letter code: Protein NRT1/ PTR FAMILY 2.3 (558 aa).

The next 12 membrane-spanning stretches (helical) occupy residues 33–53 (TLLG…VFLI), 69–89 (VANG…DSFF), 92–112 (IPVI…LTLI), 128–148 (VLCT…LALV), 176–196 (FFNW…TAIV), 203–223 (SWKL…IVFV), 329–349 (LWLS…LIVL), 371–391 (VIII…VFPM), 403–423 (LQKV…SAVV), 439–459 (VLWL…QFPA), 478–498 (SLTS…IDLI), and 517–537 (VYWL…VCSW).

The protein belongs to the major facilitator superfamily. Proton-dependent oligopeptide transporter (POT/PTR) (TC 2.A.17) family. In terms of tissue distribution, expressed in flowers, siliques and root epidermis or cortex. Detected in shoots.

It is found in the membrane. In terms of biological role, transporter involved in a passive nitrate efflux. The chain is Protein NRT1/ PTR FAMILY 2.3 (NPF2.3) from Arabidopsis thaliana (Mouse-ear cress).